The chain runs to 139 residues: Transcription factor E (139 aa).

The region spanning 7–91 is the HTH TFE/IIEalpha-type domain; that stretch reads IINKKQDEVS…DYEKILDTLL (85 aa).

It belongs to the TFE family. As to quaternary structure, monomer. Interaction with RNA polymerase subunits RpoF and RpoE is necessary for Tfe stimulatory transcription activity. Able to interact with Tbp and RNA polymerase in the absence of DNA promoter. Interacts both with the preinitiation and elongation complexes.

Functionally, transcription factor that plays a role in the activation of archaeal genes transcribed by RNA polymerase. Facilitates transcription initiation by enhancing TATA-box recognition by TATA-box-binding protein (Tbp), and transcription factor B (Tfb) and RNA polymerase recruitment. Not absolutely required for transcription in vitro, but particularly important in cases where Tbp or Tfb function is not optimal. It dynamically alters the nucleic acid-binding properties of RNA polymerases by stabilizing the initiation complex and destabilizing elongation complexes. Seems to translocate with the RNA polymerase following initiation and acts by binding to the non template strand of the transcription bubble in elongation complexes. The protein is Transcription factor E of Nanoarchaeum equitans (strain Kin4-M).